Reading from the N-terminus, the 504-residue chain is Deoxyguanosinetriphosphate triphosphohydrolase (504 aa).

The 208-residue stretch at Arg66–Cys273 folds into the HD domain.

Belongs to the dGTPase family. Type 1 subfamily. As to quaternary structure, homotetramer. Requires Mg(2+) as cofactor.

The catalysed reaction is dGTP + H2O = 2'-deoxyguanosine + triphosphate + H(+). In terms of biological role, dGTPase preferentially hydrolyzes dGTP over the other canonical NTPs. The chain is Deoxyguanosinetriphosphate triphosphohydrolase from Citrobacter koseri (strain ATCC BAA-895 / CDC 4225-83 / SGSC4696).